The primary structure comprises 200 residues: dITP/XTP pyrophosphatase (200 aa).

7 to 12 (TSNKHK) is a binding site for substrate. Glu38 and Asp73 together coordinate Mg(2+). Catalysis depends on Asp73, which acts as the Proton acceptor. Substrate is bound by residues Ser74, 154–157 (FGYD), Lys177, and 182–183 (HR).

Belongs to the HAM1 NTPase family. In terms of assembly, homodimer. It depends on Mg(2+) as a cofactor.

The enzyme catalyses XTP + H2O = XMP + diphosphate + H(+). It carries out the reaction dITP + H2O = dIMP + diphosphate + H(+). The catalysed reaction is ITP + H2O = IMP + diphosphate + H(+). Pyrophosphatase that catalyzes the hydrolysis of nucleoside triphosphates to their monophosphate derivatives, with a high preference for the non-canonical purine nucleotides XTP (xanthosine triphosphate), dITP (deoxyinosine triphosphate) and ITP. Seems to function as a house-cleaning enzyme that removes non-canonical purine nucleotides from the nucleotide pool, thus preventing their incorporation into DNA/RNA and avoiding chromosomal lesions. The polypeptide is dITP/XTP pyrophosphatase (Campylobacter jejuni subsp. jejuni serotype O:2 (strain ATCC 700819 / NCTC 11168)).